Reading from the N-terminus, the 341-residue chain is Small ribosomal subunit biogenesis GTPase RsgA (341 aa).

One can recognise a CP-type G domain in the interval 112–268 (RQQLIAANLD…LIDTPGMREL (157 aa)). GTP contacts are provided by residues 157 to 160 (TKVD) and 210 to 218 (GSSGAGKST). The Zn(2+) site is built by Cys-290, Cys-295, His-297, and Cys-303.

Belongs to the TRAFAC class YlqF/YawG GTPase family. RsgA subfamily. In terms of assembly, monomer. Associates with 30S ribosomal subunit, binds 16S rRNA. Zn(2+) serves as cofactor.

The protein resides in the cytoplasm. One of several proteins that assist in the late maturation steps of the functional core of the 30S ribosomal subunit. Helps release RbfA from mature subunits. May play a role in the assembly of ribosomal proteins into the subunit. Circularly permuted GTPase that catalyzes slow GTP hydrolysis, GTPase activity is stimulated by the 30S ribosomal subunit. This chain is Small ribosomal subunit biogenesis GTPase RsgA, found in Xylella fastidiosa (strain 9a5c).